The following is a 348-amino-acid chain: Adenosine deaminase (348 aa).

Zn(2+) is bound by residues His16 and His18. Residues His18, Asp20, and Gly174 each contribute to the substrate site. His201 is a Zn(2+) binding site. Glu204 serves as the catalytic Proton donor. Zn(2+) is bound at residue Asp282.

The protein belongs to the metallo-dependent hydrolases superfamily. Adenosine and AMP deaminases family. Adenosine deaminase subfamily. The cofactor is Zn(2+).

The enzyme catalyses adenosine + H2O + H(+) = inosine + NH4(+). It catalyses the reaction 2'-deoxyadenosine + H2O + H(+) = 2'-deoxyinosine + NH4(+). Its function is as follows. Catalyzes the hydrolytic deamination of adenosine and 2-deoxyadenosine. The sequence is that of Adenosine deaminase from Clostridium kluyveri (strain ATCC 8527 / DSM 555 / NBRC 12016 / NCIMB 10680 / K1).